The primary structure comprises 102 residues: Small ribosomal subunit protein uS10 (102 aa).

It belongs to the universal ribosomal protein uS10 family. Part of the 30S ribosomal subunit.

Functionally, involved in the binding of tRNA to the ribosomes. This is Small ribosomal subunit protein uS10 from Rhodospirillum rubrum (strain ATCC 11170 / ATH 1.1.1 / DSM 467 / LMG 4362 / NCIMB 8255 / S1).